Consider the following 158-residue polypeptide: Ribosome maturation factor RimP (158 aa).

This sequence belongs to the RimP family.

It is found in the cytoplasm. In terms of biological role, required for maturation of 30S ribosomal subunits. The protein is Ribosome maturation factor RimP of Streptococcus suis (strain 98HAH33).